The sequence spans 875 residues: cGMP-specific 3',5'-cyclic phosphodiesterase (875 aa).

Disordered regions lie at residues 1-29 and 78-102; these read MERAGPSFGQQRQQQQPQQQKQQQRDQDS and SCSCPLQQSPRADNSAPGTPTRKIS. The segment covering 10-22 has biased composition (low complexity); sequence QQRQQQQPQQQKQ. Over residues 78-101 the composition is skewed to polar residues; sequence SCSCPLQQSPRADNSAPGTPTRKI. Phosphoserine is present on serine 102. GAF domains are found at residues 164–314 and 346–503; these read DVTA…GIVL and SLEV…GLGI. Residues 536-860 form the PDEase domain; it reads ETRELQSLAA…QKWQALAEQQ (325 aa). The active-site Proton donor is histidine 613. Residues histidine 617, histidine 653, aspartate 654, and aspartate 764 each coordinate Zn(2+). Aspartate 654 lines the Mg(2+) pocket. Residue glutamine 817 coordinates 3',5'-cyclic GMP.

The protein belongs to the cyclic nucleotide phosphodiesterase family. Requires Zn(2+) as cofactor. It depends on Mg(2+) as a cofactor. In terms of processing, phosphorylation is regulated by binding of cGMP to the two allosteric sites. Phosphorylation by PRKG1 leads to its activation. In terms of tissue distribution, expressed in aortic smooth muscle cells, heart, placenta, skeletal muscle and pancreas and, to a much lesser extent, in brain, liver and lung.

It catalyses the reaction 3',5'-cyclic GMP + H2O = GMP + H(+). The protein operates within purine metabolism; 3',5'-cyclic GMP degradation; GMP from 3',5'-cyclic GMP: step 1/1. Its activity is regulated as follows. Sildenafil (Viagra) is a highly selective and potent inhibitor of PDE5A and is effective in the treatment of penile erectile dysfunction. Also inhibited by zaprinast. Its function is as follows. Plays a role in signal transduction by regulating the intracellular concentration of cyclic nucleotides. This phosphodiesterase catalyzes the specific hydrolysis of cGMP to 5'-GMP. Specifically regulates nitric-oxide-generated cGMP. The protein is cGMP-specific 3',5'-cyclic phosphodiesterase of Homo sapiens (Human).